Reading from the N-terminus, the 936-residue chain is DNA topoisomerase 1 (936 aa).

The Toprim domain maps to 15-139 (RRLVIVESPT…VKRMVFHEIT (125 aa)). Positions 21 and 108 each coordinate Mg(2+). Positions 154-611 (DIALVDAQET…FYFGGEHGVE (458 aa)) constitute a Topo IA-type catalytic domain. An interaction with DNA region spans residues 188-193 (SAGRVQ). Catalysis depends on Y339, which acts as the O-(5'-phospho-DNA)-tyrosine intermediate. Disordered stretches follow at residues 661–688 (LERMVDDPDNPGEQKPQRANLKEDLTPD), 732–767 (VLPEPEDGGDDGTAGTPAKKGKKPTGPKPRTGSLFR), 841–884 (KRRG…ETNA), and 903–936 (LLADRRARGPVKKKAPAKKAAKKAPAKKAAAKKA). Over residues 910–936 (RGPVKKKAPAKKAAKKAPAKKAAAKKA) the composition is skewed to basic residues.

The protein belongs to the type IA topoisomerase family. In terms of assembly, monomer. It depends on Mg(2+) as a cofactor.

The catalysed reaction is ATP-independent breakage of single-stranded DNA, followed by passage and rejoining.. In terms of biological role, releases the supercoiling and torsional tension of DNA, which is introduced during the DNA replication and transcription, by transiently cleaving and rejoining one strand of the DNA duplex. Introduces a single-strand break via transesterification at a target site in duplex DNA. The scissile phosphodiester is attacked by the catalytic tyrosine of the enzyme, resulting in the formation of a DNA-(5'-phosphotyrosyl)-enzyme intermediate and the expulsion of a 3'-OH DNA strand. The free DNA strand then undergoes passage around the unbroken strand, thus removing DNA supercoils. Finally, in the religation step, the DNA 3'-OH attacks the covalent intermediate to expel the active-site tyrosine and restore the DNA phosphodiester backbone. Relaxes negatively (but not positively) supercoiled DNA, concatanates and knots circular ssDNA at 52 but not 37 degrees Celsius. Preferentially nicks supercoiled DNA at C(G/T)CTT, cutting between the TT residues, binds ss and dsDNA with the recognition site. This is DNA topoisomerase 1 from Mycolicibacterium smegmatis (strain ATCC 700084 / mc(2)155) (Mycobacterium smegmatis).